Reading from the N-terminus, the 491-residue chain is Pentatricopeptide repeat-containing protein At5g27460 (491 aa).

PPR repeat units lie at residues 69 to 99 (SLSELRLISKRLIRSNRYDLALQMMEWMENQ), 105 to 139 (SVYDIALRLDLIIKTHGLKQGEEYFEKLLHSSVSM), 142 to 176 (AKSAYLPLLRAYVKNKMVKEAEALMEKLNGLGFLV), 177 to 211 (TPHPFNEMMKLYEASGQYEKVVMVVSMMKGNKIPR), 212 to 246 (NVLSYNLWMNACCEVSGVAAVETVYKEMVGDKSVE), 248 to 278 (GWSSLCTLANVYIKSGFDEKARLVLEDAEKM), 283 to 313 (NRLGYFFLITLYASLGNKEGVVRLWEVSKSV), 318 to 348 (SCVNYICVLSSLVKTGDLEEAERVFSEWEAQ), 353 to 387 (DVRVSNVLLGAYVRNGEIRKAESLHGCVLERGGTP), and 388 to 426 (NYKTWEILMEGWVKCENMEKAIDAMHQVFVLMRRCHWRP).

It belongs to the PPR family. P subfamily.

In Arabidopsis thaliana (Mouse-ear cress), this protein is Pentatricopeptide repeat-containing protein At5g27460.